Consider the following 508-residue polypeptide: Inosine-5'-monophosphate dehydrogenase (508 aa).

CBS domains are found at residues 111–170 (FITD…EITL) and 174–230 (MTTN…PDAS). Residues D267 and 317–319 (GMG) each bind NAD(+). K(+) is bound by residues G319 and G321. S322 contacts IMP. A K(+)-binding site is contributed by C324. C324 functions as the Thioimidate intermediate in the catalytic mechanism. Residues 357–359 (DGG), 380–381 (GF), and 404–408 (YRGMA) each bind IMP. R420 serves as the catalytic Proton acceptor. Q432 is an IMP binding site. G492 lines the K(+) pocket.

It belongs to the IMPDH/GMPR family. Homotetramer. It depends on K(+) as a cofactor.

The enzyme catalyses IMP + NAD(+) + H2O = XMP + NADH + H(+). Its pathway is purine metabolism; XMP biosynthesis via de novo pathway; XMP from IMP: step 1/1. Mycophenolic acid (MPA) is a non-competitive inhibitor that prevents formation of the closed enzyme conformation by binding to the same site as the amobile flap. In contrast, mizoribine monophosphate (MZP) is a competitive inhibitor that induces the closed conformation. MPA is a potent inhibitor of mammalian IMPDHs but a poor inhibitor of the bacterial enzymes. MZP is a more potent inhibitor of bacterial IMPDH. Functionally, catalyzes the conversion of inosine 5'-phosphate (IMP) to xanthosine 5'-phosphate (XMP), the first committed and rate-limiting step in the de novo synthesis of guanine nucleotides, and therefore plays an important role in the regulation of cell growth. The chain is Inosine-5'-monophosphate dehydrogenase from Leptospira interrogans serogroup Icterohaemorrhagiae serovar Lai (strain 56601).